Here is a 61-residue protein sequence, read N- to C-terminus: Ubiquinol-cytochrome c reductase complex assembly factor 6 (61 aa).

The Mitochondrial matrix portion of the chain corresponds to 1–9 (MPAGVSWGQ). Residues 10–32 (YLKFLGCALASMMAGSQAVHLYY) traverse the membrane as a helical segment. At 33–61 (KPLEDLRVYIEQEQHSTQVDPTAKPPESA) the chain is on the mitochondrial intermembrane side.

It belongs to the UQCC6 family. Interacts with sloth1; the interaction stabilizes both components. As to expression, expressed in the brain.

It localises to the mitochondrion inner membrane. The protein resides in the mitochondrion. In terms of biological role, required for the assembly and stability of the mitochondrial ubiquinol-cytochrome c reductase complex (complex III (CIII) or cytochrome b-c1 complex), a multisubunit transmembrane complex that is part of the mitochondrial electron transport chain (ETC) which drives oxidative phosphorylation. In Drosophila melanogaster (Fruit fly), this protein is Ubiquinol-cytochrome c reductase complex assembly factor 6.